The following is a 1412-amino-acid chain: Sister chromatid cohesion protein PDS5 homolog B (1412 aa).

One copy of the HEAT repeat lies at 383–419 (LLVNDHLLNFVRERTLDKRWRVRKEAMMGLAQIYKKY). A disordered region spans residues 1137-1412 (PLSSAGKQSQ…RRRTSKRERR (276 aa)). Composition is skewed to low complexity over residues 1139-1149 (SSAGKQSQSKS) and 1156-1167 (SNASSSSNPSSP). Basic and acidic residues-rich tracts occupy residues 1172–1184 (GRLD…HSEN), 1196–1212 (KKTD…LEKP), 1223–1241 (SEEK…DQKL), and 1263–1272 (QEEKRLKEDV). A compositionally biased stretch (acidic residues) spans 1322–1331 (VEEEEEEEER). The segment covering 1350 to 1362 (RTQQSRAGRSKQA) has biased composition (polar residues). A compositionally biased stretch (acidic residues) spans 1386 to 1397 (VPQEEVMEEEEV). Residues 1402-1412 (VRRRTSKRERR) are compositionally biased toward basic residues.

As to quaternary structure, interacts with the cohesin complex.

Its subcellular location is the nucleus. Functionally, plays a role in androgen-induced proliferative arrest. Required for maintenance of sister chromatid cohesion during mitosis. This Gallus gallus (Chicken) protein is Sister chromatid cohesion protein PDS5 homolog B (PDS5B).